Here is a 135-residue protein sequence, read N- to C-terminus: Ribonuclease P protein component (135 aa).

Positions 115 to 135 are disordered; the sequence is ETEPVSPVSPTSLPQNERGSP. Residues 122 to 135 show a composition bias toward polar residues; the sequence is VSPTSLPQNERGSP.

The protein belongs to the RnpA family. As to quaternary structure, consists of a catalytic RNA component (M1 or rnpB) and a protein subunit.

It carries out the reaction Endonucleolytic cleavage of RNA, removing 5'-extranucleotides from tRNA precursor.. RNaseP catalyzes the removal of the 5'-leader sequence from pre-tRNA to produce the mature 5'-terminus. It can also cleave other RNA substrates such as 4.5S RNA. The protein component plays an auxiliary but essential role in vivo by binding to the 5'-leader sequence and broadening the substrate specificity of the ribozyme. The protein is Ribonuclease P protein component of Chloroflexus aggregans (strain MD-66 / DSM 9485).